The chain runs to 1354 residues: RNA-directed RNA polymerase VP1 (1354 aa).

The enzyme catalyses RNA(n) + a ribonucleoside 5'-triphosphate = RNA(n+1) + diphosphate. Its function is as follows. RNA-directed RNA polymerase that is involved in transcription and genome replication. Following infection, it catalyzes the synthesis of fully conservative plus strands. After core assembly, which consists in recruitment of one capped plus-strand for each genomic segments and polymerase complexes, the polymerase switches mode and catalyzes the synthesis of complementary minus-strands. The sequence is that of RNA-directed RNA polymerase VP1 from Cryphonectria parasitica mycoreovirus 1 (strain 9B21) (CpMYRV-1).